A 2319-amino-acid chain; its full sequence is Coagulation factor VIII (2319 aa).

A signal peptide spans 1-19; it reads MQIALFACFFLSLFNFCSS. 2 consecutive Plastocyanin-like domains span residues 20–199 and 207–349; these read AIRR…LLVC and ERTQ…VDSC. In terms of domain architecture, F5/8 type A 1 spans 20 to 349; that stretch reads AIRRYYLGAV…MEAYVKVDSC (330 aa). N61 carries N-linked (GlcNAc...) asparagine glycosylation. C173 and C199 form a disulfide bridge. N233 and N259 each carry an N-linked (GlcNAc...) asparagine glycan. Y367 carries the sulfotyrosine modification. 2 consecutive Plastocyanin-like domains span residues 399–573 and 583–730; these read KTWI…LLIC and NQMM…VSSC. The 332-residue stretch at 399–730 folds into the F5/8 type A 2 domain; sequence KTWIHYISAE…MTALLKVSSC (332 aa). Residue N423 is glycosylated (N-linked (GlcNAc...) asparagine). C547 and C573 form a disulfide bridge. N601 is a glycosylation site (N-linked (GlcNAc...) asparagine). Residues Y737, Y738, and Y742 each carry the sulfotyrosine modification. The segment at 760–1640 is b; the sequence is SFFQNTNHPN…IPPVLKRHQR (881 aa). 19 N-linked (GlcNAc...) asparagine glycosylation sites follow: N880, N958, N1015, N1022, N1026, N1044, N1076, N1087, N1136, N1161, N1192, N1255, N1268, N1273, N1274, N1302, N1316, N1340, and N1378. The interval 1530–1549 is disordered; sequence WNKAKRHGESIKGKTESSKN. Basic and acidic residues predominate over residues 1536 to 1548; the sequence is HGESIKGKTESSK. A sulfotyrosine mark is found at Y1669 and Y1687. 2 consecutive Plastocyanin-like domains span residues 1683–1845 and 1855–2008; these read KTRH…LLIC and GRQV…SKQC. In terms of domain architecture, F5/8 type A 3 spans 1683–2008; it reads KTRHYFIAAV…TLFLVYSKQC (326 aa). N-linked (GlcNAc...) asparagine glycosylation occurs at N1797. 3 disulfide bridges follow: C1819-C1845, C2008-C2156, and C2161-C2313. F5/8 type C domains are found at residues 2008 to 2156 and 2161 to 2313; these read CQIP…LMGC and CSIP…ILGC. N2105 carries N-linked (GlcNAc...) asparagine glycosylation.

Belongs to the multicopper oxidase family. Interacts with vWF. vWF binding is essential for the stabilization of F8 in circulation. Post-translationally, the binding of vWF and activation depend on the sulfation of Tyr-1669. In terms of processing, proteolytically cleaved by cathepsin CTSG to produce a partially activated form. As to expression, found in most tissues.

It is found in the secreted. Its subcellular location is the extracellular space. Functionally, factor VIII, along with calcium and phospholipid, acts as a cofactor for factor IXa when it converts factor X to the activated form, factor Xa. The protein is Coagulation factor VIII (F8) of Mus musculus (Mouse).